A 133-amino-acid polypeptide reads, in one-letter code: UPF0102 protein ABSDF1354 (133 aa).

Belongs to the UPF0102 family.

This Acinetobacter baumannii (strain SDF) protein is UPF0102 protein ABSDF1354.